A 440-amino-acid chain; its full sequence is Elongation factor 1-gamma (440 aa).

At Ala2 the chain carries N-acetylalanine. Residues 2-87 enclose the GST N-terminal domain; sequence AAGTLYTYPE…YVSNEELRGS (86 aa). The 129-residue stretch at 88-216 folds into the GST C-terminal domain; that stretch reads TPEAAAQVVQ…VKLCEKMAQF (129 aa). N6-acetyllysine is present on residues Lys147 and Lys212. Residues 221–257 show a composition bias toward basic and acidic residues; sequence FAESQPKKDTPRKEKGSREEKLKPQAERKEGKEEKKA. The segment at 221–267 is disordered; it reads FAESQPKKDTPRKEKGSREEKLKPQAERKEGKEEKKAAAPAPEEELD. Lys256 participates in a covalent cross-link: Glycyl lysine isopeptide (Lys-Gly) (interchain with G-Cter in SUMO1). The EF-1-gamma C-terminal domain maps to 279 to 440; sequence AKDPFAHLPK…KAFNQGKIFK (162 aa). A Glycyl lysine isopeptide (Lys-Gly) (interchain with G-Cter in SUMO2) cross-link involves residue Lys288. Residue Lys404 is modified to N6-acetyllysine. Lys437 is subject to N6-acetyllysine; alternate. The residue at position 437 (Lys437) is an N6-malonyllysine; alternate.

In terms of assembly, EF-1 is composed of four subunits: alpha, beta, delta, and gamma.

Its function is as follows. Probably plays a role in anchoring the complex to other cellular components. This Bos taurus (Bovine) protein is Elongation factor 1-gamma (EEF1G).